A 111-amino-acid polypeptide reads, in one-letter code: Cytochrome c (111 aa).

N-acetylalanine is present on alanine 1. Cysteine 22, cysteine 25, and histidine 26 together coordinate heme c. An N6,N6,N6-trimethyllysine modification is found at lysine 80. Methionine 88 lines the heme c pocket. Lysine 94 bears the N6,N6,N6-trimethyllysine mark.

The protein belongs to the cytochrome c family. In terms of processing, binds 1 heme c group covalently per subunit.

It localises to the mitochondrion intermembrane space. Electron carrier protein. The oxidized form of the cytochrome c heme group can accept an electron from the heme group of the cytochrome c1 subunit of cytochrome reductase. Cytochrome c then transfers this electron to the cytochrome oxidase complex, the final protein carrier in the mitochondrial electron-transport chain. The protein is Cytochrome c of Guizotia abyssinica (Niger).